A 127-amino-acid polypeptide reads, in one-letter code: Large ribosomal subunit protein bL17 (127 aa).

It belongs to the bacterial ribosomal protein bL17 family. In terms of assembly, part of the 50S ribosomal subunit. Contacts protein L32.

In Lacticaseibacillus casei (strain BL23) (Lactobacillus casei), this protein is Large ribosomal subunit protein bL17.